An 846-amino-acid polypeptide reads, in one-letter code: MVAPGRMVTSSRRIGRVTNKTKLIIYRGSDKVDTSAAETVLWDQEAGGAGKDSNKHQHIGATGVESGELLEHHLQAALSSASLLHSSNKPSSPKSVKEAPAAALNYHIPTPDATGLVSDTVFSQLYQRTKYVEPYNFIRFSDTVEESSCGWGGLGYCMDDADERWLNDFNSKAEGSSGDVKSDKEQGRGMRVKGKDREKEKGDAPAPLVISEDMFEYIMGVFEKYTEENAPMLHTDLSLLPPFSAVENMFSTPISPAFLPSNEIPKELGDLKACARMARNVYPHWKSRREQRQGKSILPQLNYDETNDNDPYVCFRRRDIRATRKTRRTDNFSIEQFQKLQFELRSAHALADRVLTREREKKSLYEAEKELWEARWKFFETKRRWPSLGMTSDEEHKITGRPTIVPPIQIPSLSGQTPLTSGQSSSHMRKRTDKDREERAQRERYDAQRNAERSGILSGRSNAPDALKERLQALQQKTEEMLARKKEQDAHWDDSIDSPYQPLPPSNSVHAFRSLFVLDPCRAQCKDSETGNEILHPESFRIRRGRGGIVRLDRRTSIYSHRRGIQPTSPSEYPTWLFPDIAPRRSEKKRPRSIDEVEEEMQEQSPKVMRKDLNETWRYDVDRGGAVGVGMGLEEDYDRVIIDDLEAKYIRHRISLLQESDCAKLRPDNYILDQTREALDAAADAKPPPAPIFQKPPAPQPNPQLLAAHLQQQQMLAQQQQMEQFQRFQLMAQQQAMAQAQAQAQAQAQAQAQAQAQAQVQAQGQGHPQAHLQTHPQGVPQPNGVNSPMPNGQQMLPPSDGVKQLKLPPHAVARLGAAMANANANANGGLHVLQQQQQQHAQTSQQ.

Disordered regions lie at residues 169–204 (FNSKAEGSSGDVKSDKEQGRGMRVKGKDREKEKGDA), 391–466 (TSDE…APDA), 587–607 (EKKRPRSIDEVEEEMQEQSPK), 682–702 (AADAKPPPAPIFQKPPAPQPN), and 759–804 (QVQA…GVKQ). A compositionally biased stretch (basic and acidic residues) spans 180–203 (VKSDKEQGRGMRVKGKDREKEKGD). The segment covering 411 to 426 (PSLSGQTPLTSGQSSS) has biased composition (polar residues). Residues 432 to 452 (TDKDREERAQRERYDAQRNAE) show a composition bias toward basic and acidic residues. A coiled-coil region spans residues 434-490 (KDREERAQRERYDAQRNAERSGILSGRSNAPDALKERLQALQQKTEEMLARKKEQDA). A compositionally biased stretch (pro residues) spans 686-702 (KPPPAPIFQKPPAPQPN). A compositionally biased stretch (low complexity) spans 759-773 (QVQAQGQGHPQAHLQ). Positions 783–796 (NGVNSPMPNGQQML) are enriched in polar residues.

The protein belongs to the enhancer of polycomb family. Component of the NuA4 histone acetyltransferase complex.

It is found in the nucleus. Component of the NuA4 histone acetyltransferase complex which is involved in transcriptional activation of selected genes principally by acetylation of nucleosomal histone H4 and H2A. The NuA4 complex is also involved in DNA repair. Involved in gene silencing by neighboring heterochromatin, blockage of the silencing spreading along the chromosome, and required for cell cycle progression through G2/M. The chain is Enhancer of polycomb-like protein 1 (EPL1) from Cryptococcus neoformans var. neoformans serotype D (strain JEC21 / ATCC MYA-565) (Filobasidiella neoformans).